Reading from the N-terminus, the 859-residue chain is Homeobox-leucine zipper protein HOX32 (859 aa).

Residues Ala7–Gly31 form a disordered region. The homeobox DNA-binding region spans Asp29–Lys92. Positions Val100 to Asn129 form a coiled coil. Polar residues predominate over residues Thr146–Ala164. The disordered stretch occupies residues Thr146–Ala172. The START domain occupies Asp171–Glu393.

This sequence belongs to the HD-ZIP homeobox family. Class III subfamily. In terms of tissue distribution, expressed in seedlings, roots, stems, leaf sheaths and blades and panicles.

It is found in the nucleus. Its function is as follows. Probable transcription factor. This chain is Homeobox-leucine zipper protein HOX32 (HOX32), found in Oryza sativa subsp. japonica (Rice).